The sequence spans 292 residues: 4-hydroxybenzoate octaprenyltransferase (292 aa).

9 helical membrane-spanning segments follow: residues 24-44 (IGTL…NAGM), 47-67 (LTNF…GCVI), 97-117 (AISL…MLSV), 119-139 (TILL…MKRY), 145-165 (VVLG…SINA), 171-191 (WLLF…YAMV), 214-234 (HIIG…GALN), 238-258 (LSYW…QVLI), and 270-290 (FLNN…SYPV).

It belongs to the UbiA prenyltransferase family. It depends on Mg(2+) as a cofactor.

The protein resides in the cell inner membrane. The catalysed reaction is all-trans-octaprenyl diphosphate + 4-hydroxybenzoate = 4-hydroxy-3-(all-trans-octaprenyl)benzoate + diphosphate. Its pathway is cofactor biosynthesis; ubiquinone biosynthesis. Functionally, catalyzes the prenylation of para-hydroxybenzoate (PHB) with an all-trans polyprenyl group. Mediates the second step in the final reaction sequence of ubiquinone-8 (UQ-8) biosynthesis, which is the condensation of the polyisoprenoid side chain with PHB, generating the first membrane-bound Q intermediate 3-octaprenyl-4-hydroxybenzoate. The sequence is that of 4-hydroxybenzoate octaprenyltransferase from Pseudoalteromonas translucida (strain TAC 125).